The sequence spans 89 residues: Small ribosomal subunit protein uS15 (89 aa).

The protein belongs to the universal ribosomal protein uS15 family. Part of the 30S ribosomal subunit. Forms a bridge to the 50S subunit in the 70S ribosome, contacting the 23S rRNA.

One of the primary rRNA binding proteins, it binds directly to 16S rRNA where it helps nucleate assembly of the platform of the 30S subunit by binding and bridging several RNA helices of the 16S rRNA. In terms of biological role, forms an intersubunit bridge (bridge B4) with the 23S rRNA of the 50S subunit in the ribosome. The sequence is that of Small ribosomal subunit protein uS15 from Methylocella silvestris (strain DSM 15510 / CIP 108128 / LMG 27833 / NCIMB 13906 / BL2).